We begin with the raw amino-acid sequence, 139 residues long: Proline-rich nuclear receptor coactivator 2 (139 aa).

Disordered stretches follow at residues 1-51 (MGGG…GYNS), 61-80 (NGGKNKNFPNNQSWNSSLSG), and 89-110 (ANQNYAGAKFSEPPSPSVLPKP). Composition is skewed to polar residues over residues 11-36 (APQSRNVSKNQQQLNRQKTKEQNSQM) and 61-79 (NGGKNKNFPNNQSWNSSLS). The SH3-binding motif lies at 99 to 105 (SEPPSPS). The segment covering 101 to 110 (PPSPSVLPKP) has biased composition (pro residues).

The protein belongs to the PNRC family. PNRC2 subfamily. In terms of assembly, interacts with UPF1/RENT1; preferentially interacts with hyperphosphorylated form. Interacts with DCP1A. Interacts with many nuclear receptors including ESR1, ESRRA, ESRRG, NR3C1/GR, NR5A1, PGR, TR, RAR and RXR. In terms of tissue distribution, expressed in heart, lung, muscle and brain.

Its subcellular location is the nucleus. The protein localises to the cytoplasm. It localises to the P-body. Involved in nonsense-mediated mRNA decay (NMD) by acting as a bridge between the mRNA decapping complex and the NMD machinery. May act by targeting the NMD machinery to the P-body and recruiting the decapping machinery to aberrant mRNAs. Required for UPF1/RENT1 localization to the P-body. Plays a role in glucocorticoid receptor-mediated mRNA degradation by interacting with the glucocorticoid receptor NR3C1 in a ligand-dependent manner when it is bound to the 5' UTR of target mRNAs and recruiting the RNA helicase UPF1 and the mRNA-decapping enzyme DCP1A, leading to RNA decay. Also acts as a nuclear receptor coactivator. May play a role in controlling the energy balance between energy storage and energy expenditure. The protein is Proline-rich nuclear receptor coactivator 2 (PNRC2) of Homo sapiens (Human).